Consider the following 904-residue polypeptide: Translation initiation factor IF-2 (904 aa).

Disordered stretches follow at residues 134–248 (RQRN…GSHV) and 267–315 (HLSA…FERP). Basic and acidic residues predominate over residues 136–177 (RNLDEQQRLAESDRVRDEEIQRKRDEEQAAKDRAEAERKAAE). Low complexity-rich tracts occupy residues 178 to 230 (EAAA…STPA) and 285 to 303 (GRPG…RGSN). The tr-type G domain maps to 403-572 (TRPPVVTIMG…SLQAEVLELK (170 aa)). Residues 412-419 (GHVDHGKT) are G1. 412–419 (GHVDHGKT) serves as a coordination point for GTP. Positions 437-441 (GITQH) are G2. Residues 458–461 (DTPG) form a G3 region. Residues 458–462 (DTPGH) and 512–515 (NKID) contribute to the GTP site. Residues 512–515 (NKID) are G4. A G5 region spans residues 548-550 (SAK).

This sequence belongs to the TRAFAC class translation factor GTPase superfamily. Classic translation factor GTPase family. IF-2 subfamily.

The protein resides in the cytoplasm. Functionally, one of the essential components for the initiation of protein synthesis. Protects formylmethionyl-tRNA from spontaneous hydrolysis and promotes its binding to the 30S ribosomal subunits. Also involved in the hydrolysis of GTP during the formation of the 70S ribosomal complex. The sequence is that of Translation initiation factor IF-2 from Xanthomonas oryzae pv. oryzae (strain PXO99A).